The primary structure comprises 392 residues: Phosphoglycerate kinase (392 aa).

Residues 21 to 23, Arg-36, 59 to 62, Arg-114, and Arg-147 each bind substrate; these read DMN and HLGR. ATP-binding positions include Lys-198, Glu-320, and 346-349; that span reads GGDT.

Belongs to the phosphoglycerate kinase family. Monomer.

It is found in the cytoplasm. It carries out the reaction (2R)-3-phosphoglycerate + ATP = (2R)-3-phospho-glyceroyl phosphate + ADP. It functions in the pathway carbohydrate degradation; glycolysis; pyruvate from D-glyceraldehyde 3-phosphate: step 2/5. The protein is Phosphoglycerate kinase (pgk) of Neisseria meningitidis serogroup B (strain ATCC BAA-335 / MC58).